The sequence spans 448 residues: MNTILPSDPARDDVLAGRPTLWLNPSYRKQAIDTSDLPVSPADVASARQNWQRLAPLLAECFPELKDTGGDIRSELVELKELREALGYRTREFGNVFIKADSHLPVAGSIKARGGVYEVFLFADSLARQKGVLVDGEDIRKLATEEARSLFSGYTVAVGSTGNLGLSVGIAARALGFKATVHMSSDAKAWKVERLRKLGVDVIQHEADYTTAVENARDIADADPTIYFVDDEQSRHLFLGYSAAASELASQLDERGITIDEENPLFLYLPCGIGGAPGGVAFGAKAIFGDNVHAFFVEPVQSPCALVHMMSGKQELVSVYDVGLTNKTEADGMAVARMSAFVAKVMREMLAGVYTAADDDLFKLLRMAWITQRQKLEPSAAAALLGPDFLLRHKEGRRFQTLNVIEEKMSQATHVLWTTGGSFVPEEQFQHFLDQAESIAAPSDRNDE.

Residue K111 is modified to N6-(pyridoxal phosphate)lysine.

The protein belongs to the serine/threonine dehydratase family. DsdA subfamily. It depends on pyridoxal 5'-phosphate as a cofactor.

It catalyses the reaction D-serine = pyruvate + NH4(+). The protein is Probable D-serine dehydratase of Rhizobium etli (strain CIAT 652).